The following is a 182-amino-acid chain: Adenylate kinase (182 aa).

12–17 (GAGKGT) provides a ligand contact to ATP. The tract at residues 32-61 (STGDLLRAEVKAGSELGKEAEAVMNRGELV) is NMP. Residues T33, R38, 59 to 61 (ELV), 85 to 88 (GFPR), and Q92 contribute to the AMP site. Residues 126 to 132 (ARGRADD) form an LID region. R127 contacts ATP. Residues R129 and R140 each contribute to the AMP site. ATP is bound at residue G168.

Belongs to the adenylate kinase family. Monomer.

It localises to the cytoplasm. It carries out the reaction AMP + ATP = 2 ADP. It participates in purine metabolism; AMP biosynthesis via salvage pathway; AMP from ADP: step 1/1. Its function is as follows. Catalyzes the reversible transfer of the terminal phosphate group between ATP and AMP. Plays an important role in cellular energy homeostasis and in adenine nucleotide metabolism. The sequence is that of Adenylate kinase from Synechococcus sp. (strain RCC307).